Here is a 287-residue protein sequence, read N- to C-terminus: Pantothenate synthetase (287 aa).

Residue 30–37 (MGNLHDGH) coordinates ATP. Catalysis depends on H37, which acts as the Proton donor. (R)-pantoate is bound at residue Q61. Residue Q61 participates in beta-alanine binding. 148–151 (GQKD) is an ATP binding site. Q154 serves as a coordination point for (R)-pantoate. ATP contacts are provided by residues I177 and 185-188 (LSSR).

Belongs to the pantothenate synthetase family. Homodimer.

The protein resides in the cytoplasm. It catalyses the reaction (R)-pantoate + beta-alanine + ATP = (R)-pantothenate + AMP + diphosphate + H(+). It participates in cofactor biosynthesis; (R)-pantothenate biosynthesis; (R)-pantothenate from (R)-pantoate and beta-alanine: step 1/1. Functionally, catalyzes the condensation of pantoate with beta-alanine in an ATP-dependent reaction via a pantoyl-adenylate intermediate. The polypeptide is Pantothenate synthetase (Psychrobacter cryohalolentis (strain ATCC BAA-1226 / DSM 17306 / VKM B-2378 / K5)).